Here is a 373-residue protein sequence, read N- to C-terminus: RNA 3'-terminal phosphate cyclase-like protein (373 aa).

It belongs to the RNA 3'-terminal cyclase family. Type 2 subfamily. As to quaternary structure, part of the small subunit (SSU) processome, composed of more than 70 proteins and the RNA chaperone small nucleolar RNA (snoRNA) U3. Interacts with BMS1.

The protein localises to the nucleus. It is found in the nucleolus. Functionally, as part of the small subunit (SSU) processome, it plays a role in 40S-ribosomal-subunit biogenesis in the early pre-rRNA processing steps at sites A0, A1 and A2 that are required for proper maturation of the 18S RNA. Activates BMS1 by promoting GDP/GTP exchange. Does not have cyclase activity. This is RNA 3'-terminal phosphate cyclase-like protein (RCL1) from Bos taurus (Bovine).